The primary structure comprises 322 residues: Lymphatic vessel endothelial hyaluronic acid receptor 1 (322 aa).

An N-terminal signal peptide occupies residues 1–19; it reads MARCFSLVLLLTSIWTTRL. Residues 20–238 lie on the Extracellular side of the membrane; the sequence is LVQGSLRAEE…EAAGFGGVPT (219 aa). Positions 40 to 130 constitute a Link domain; that stretch reads GITLVSKKAN…SRQFAAYCYN (91 aa). Asn53 is a glycosylation site (N-linked (GlcNAc...) asparagine). Cystine bridges form between Cys61-Cys128 and Cys85-Cys106. Residue Asn130 is glycosylated (N-linked (GlcNAc...) asparagine). The chain crosses the membrane as a helical span at residues 239–259; it reads ALLVLALLFFGAAAGLGFCYV. Topologically, residues 260–322 are cytoplasmic; it reads KRYVKAFPFT…TTVRCLEAEV (63 aa). Positions 279–309 are enriched in basic and acidic residues; sequence ETKVVKEEKANDSNPNEESKKTDKNPEESKS. The tract at residues 279–322 is disordered; that stretch reads ETKVVKEEKANDSNPNEESKKTDKNPEESKSPSKTTVRCLEAEV.

In terms of assembly, homodimer; disulfide-linked. Interacts with PDGFB and IGFBP3. Forms a transient ternary complex with PDGFB and PDGFRB in TGN. In terms of processing, O-glycosylated. In terms of tissue distribution, mainly expressed in endothelial cells lining lymphatic vessels.

It is found in the cell membrane. Its function is as follows. Ligand-specific transporter trafficking between intracellular organelles (TGN) and the plasma membrane. Plays a role in autocrine regulation of cell growth mediated by growth regulators containing cell surface retention sequence binding (CRS). May act as a hyaluronan (HA) transporter, either mediating its uptake for catabolism within lymphatic endothelial cells themselves, or its transport into the lumen of afferent lymphatic vessels for subsequent re-uptake and degradation in lymph nodes. Binds to pericelluar hyaluronan matrices deposited on the surface of leukocytes and facilitates cell adhesion and migration through lymphatic endothelium. The protein is Lymphatic vessel endothelial hyaluronic acid receptor 1 (LYVE1) of Homo sapiens (Human).